The following is a 619-amino-acid chain: 2-succinyl-5-enolpyruvyl-6-hydroxy-3-cyclohexene-1-carboxylate synthase (619 aa).

Positions 385-398 are enriched in polar residues; sequence SSAHQSLAATNSDS. Residues 385 to 415 form a disordered region; the sequence is SSAHQSLAATNSDSSTDDIIENTDEEGSNES. A compositionally biased stretch (acidic residues) spans 399-413; that stretch reads STDDIIENTDEEGSN.

It belongs to the TPP enzyme family. MenD subfamily. As to quaternary structure, homodimer. Requires Mg(2+) as cofactor. It depends on Mn(2+) as a cofactor. Thiamine diphosphate serves as cofactor.

It catalyses the reaction isochorismate + 2-oxoglutarate + H(+) = 5-enolpyruvoyl-6-hydroxy-2-succinyl-cyclohex-3-ene-1-carboxylate + CO2. It participates in quinol/quinone metabolism; 1,4-dihydroxy-2-naphthoate biosynthesis; 1,4-dihydroxy-2-naphthoate from chorismate: step 2/7. Its pathway is quinol/quinone metabolism; menaquinone biosynthesis. Functionally, catalyzes the thiamine diphosphate-dependent decarboxylation of 2-oxoglutarate and the subsequent addition of the resulting succinic semialdehyde-thiamine pyrophosphate anion to isochorismate to yield 2-succinyl-5-enolpyruvyl-6-hydroxy-3-cyclohexene-1-carboxylate (SEPHCHC). The protein is 2-succinyl-5-enolpyruvyl-6-hydroxy-3-cyclohexene-1-carboxylate synthase of Haloquadratum walsbyi (strain DSM 16790 / HBSQ001).